Consider the following 445-residue polypeptide: Phosphoglucosamine mutase (445 aa).

The active-site Phosphoserine intermediate is the S102. Mg(2+) is bound by residues S102, D241, D243, and D245. The residue at position 102 (S102) is a Phosphoserine.

The protein belongs to the phosphohexose mutase family. Mg(2+) serves as cofactor. Activated by phosphorylation.

It carries out the reaction alpha-D-glucosamine 1-phosphate = D-glucosamine 6-phosphate. Its function is as follows. Catalyzes the conversion of glucosamine-6-phosphate to glucosamine-1-phosphate. This is Phosphoglucosamine mutase from Klebsiella pneumoniae (strain 342).